We begin with the raw amino-acid sequence, 180 residues long: Amnesiac neuropeptides (180 aa).

Residues 1-32 (MRSFCCCFYPAAVALHCVLLFYTFFLLFRASA) form the signal peptide. 2 propeptides span residues 33–35 (LRR) and 152–180 (GRRS…GEMR). The interval 155–180 (SVPRGQPKFSRENPRALSPSLLGEMR) is disordered.

Enriched expression in the embryonic and larval nervous systems. Strongly expressed in two large neurons that project over all the lobes of the mushroom bodies.

It is found in the secreted. Required for associative learning and memory in adults. Expression pattern suggests a modulatory role in memory formation. Controls neurotransmitter-mediated signaling pathways associated with the structure of the larval peripheral nerve. This Drosophila melanogaster (Fruit fly) protein is Amnesiac neuropeptides (amn).